Reading from the N-terminus, the 315-residue chain is Leukocidin-S subunit (315 aa).

The N-terminal stretch at 1–29 (MLKNKILATTLSVSLLAPLANPLLENAKA) is a signal peptide.

It belongs to the aerolysin family. As to quaternary structure, leukocidin consists of two protein components: F and S.

Its function is as follows. Leukocidin causes cytotoxic changes in polymorphonuclear leukocytes. The chain is Leukocidin-S subunit (lukS) from Staphylococcus aureus.